A 223-amino-acid polypeptide reads, in one-letter code: uncharacterized protein (223 aa).

The N-terminal stretch at 1-17 (MLGQGLIFISLAFVAHA) is a signal peptide. N-linked (GlcNAc...) asparagine glycosylation is present at asparagine 58. Residues 149 to 188 (VRKKGSRPSKPQKEKQGNKQGSKTEESPNVDEDELESEPE) form a disordered region. The segment covering 159–174 (PQKEKQGNKQGSKTEE) has biased composition (basic and acidic residues). Positions 176–187 (PNVDEDELESEP) are enriched in acidic residues. Residues 191-211 (TFFQKYGLYLIPILFLIIMSG) traverse the membrane as a helical segment.

Its subcellular location is the endoplasmic reticulum membrane. This is an uncharacterized protein from Schizosaccharomyces pombe (strain 972 / ATCC 24843) (Fission yeast).